Reading from the N-terminus, the 302-residue chain is Lysosomal thioesterase PPT2 (302 aa).

An N-terminal signal peptide occupies residues Met-1–Ala-27. Asn-60 is a glycosylation site (N-linked (GlcNAc...) asparagine). 2 disulfide bridges follow: Cys-109–Cys-117 and Cys-165–Cys-176. Residue Ser-111 is the Nucleophile of the active site. N-linked (GlcNAc...) asparagine glycans are attached at residues Asn-190 and Asn-206. Asp-228 is an active-site residue. Asn-245 is a glycosylation site (N-linked (GlcNAc...) asparagine). Cys-276 and Cys-296 form a disulfide bridge. His-283 is an active-site residue. The N-linked (GlcNAc...) asparagine glycan is linked to Asn-289.

Belongs to the palmitoyl-protein thioesterase family. In terms of tissue distribution, expressed throughout the brain, primarily in neurons, and at lower levels in glial cells.

Its subcellular location is the lysosome. It carries out the reaction hexadecanoyl-CoA + H2O = hexadecanoate + CoA + H(+). The catalysed reaction is S-hexadecanoyl-N-acetylcysteamine + H2O = N-acetylcysteamine + hexadecanoate + H(+). Functionally, catalyzes the cleavage of thioester bonds from S-palmitoyl-CoA or S-palmitoyl-N-acetylcysteamine (unbranched structures) but does not have activity against palmitoylcysteine or palmitoylated proteins, branched structures or bulky head groups. Conversely, hydrolyzes both long and short chain fatty acyl-CoA substrate. This Mus musculus (Mouse) protein is Lysosomal thioesterase PPT2 (Ppt2).